The sequence spans 39 residues: Potassium channel toxin alpha-KTx 2.17 (39 aa).

Disulfide bonds link Cys7–Cys29, Cys13–Cys34, and Cys17–Cys36. The residue at position 39 (Ile39) is an Isoleucine amide.

The protein belongs to the short scorpion toxin superfamily. Potassium channel inhibitor family. Alpha-KTx 02 subfamily. As to expression, expressed by the venom gland.

It localises to the secreted. Functionally, blocks human voltage-gated potassium channels Kv1.1/KCNA1 (IC(50)=4.8 nM) and Kv1.2/KCNA2 (IC(50)=2.9 nM). In Centruroides tecomanus (Scorpion), this protein is Potassium channel toxin alpha-KTx 2.17.